The following is a 321-amino-acid chain: Lipoyl synthase (321 aa).

Positions 68, 73, 79, 94, 98, 101, and 308 each coordinate [4Fe-4S] cluster. A Radical SAM core domain is found at 80–297 (FNHGTATFMI…KAIALDLGFT (218 aa)).

This sequence belongs to the radical SAM superfamily. Lipoyl synthase family. The cofactor is [4Fe-4S] cluster.

Its subcellular location is the cytoplasm. It carries out the reaction [[Fe-S] cluster scaffold protein carrying a second [4Fe-4S](2+) cluster] + N(6)-octanoyl-L-lysyl-[protein] + 2 oxidized [2Fe-2S]-[ferredoxin] + 2 S-adenosyl-L-methionine + 4 H(+) = [[Fe-S] cluster scaffold protein] + N(6)-[(R)-dihydrolipoyl]-L-lysyl-[protein] + 4 Fe(3+) + 2 hydrogen sulfide + 2 5'-deoxyadenosine + 2 L-methionine + 2 reduced [2Fe-2S]-[ferredoxin]. Its pathway is protein modification; protein lipoylation via endogenous pathway; protein N(6)-(lipoyl)lysine from octanoyl-[acyl-carrier-protein]: step 2/2. Its function is as follows. Catalyzes the radical-mediated insertion of two sulfur atoms into the C-6 and C-8 positions of the octanoyl moiety bound to the lipoyl domains of lipoate-dependent enzymes, thereby converting the octanoylated domains into lipoylated derivatives. This Tolumonas auensis (strain DSM 9187 / NBRC 110442 / TA 4) protein is Lipoyl synthase.